We begin with the raw amino-acid sequence, 153 residues long: Ribonuclease H (153 aa).

An RNase H type-1 domain is found at 1 to 141; that stretch reads MKKIQLFTDG…CDDLARRAAE (141 aa). Asp-9, Glu-47, Asp-69, and Asp-133 together coordinate Mg(2+).

Belongs to the RNase H family. In terms of assembly, monomer. It depends on Mg(2+) as a cofactor.

The protein localises to the cytoplasm. It carries out the reaction Endonucleolytic cleavage to 5'-phosphomonoester.. In terms of biological role, endonuclease that specifically degrades the RNA of RNA-DNA hybrids. This is Ribonuclease H from Psychromonas ingrahamii (strain DSM 17664 / CCUG 51855 / 37).